The following is a 597-amino-acid chain: Probable methyltransferase-like protein 25 (597 aa).

Over residues 245–254 the composition is skewed to basic and acidic residues; the sequence is ECKGDAESVQ. Disordered stretches follow at residues 245–265 and 317–342; these read ECKG…DLSA and TSSQ…KARD. Residues 317 to 326 show a composition bias toward polar residues; that stretch reads TSSQVQNTEK.

Functionally, probable methyltransferase. The polypeptide is Probable methyltransferase-like protein 25 (Mettl25) (Mus musculus (Mouse)).